The following is a 393-amino-acid chain: Argininosuccinate synthase (393 aa).

ATP is bound by residues Ala-7 to Ser-15 and Ala-34. Residues Tyr-85 and Ser-90 each contribute to the L-citrulline site. ATP is bound at residue Gly-115. Residues Thr-117, Asn-121, and Asp-122 each contribute to the L-aspartate site. Asn-121 contributes to the L-citrulline binding site. The L-citrulline site is built by Arg-125, Ser-176, Ser-185, Glu-261, and Tyr-273.

This sequence belongs to the argininosuccinate synthase family. Type 1 subfamily. In terms of assembly, homotetramer.

It localises to the cytoplasm. The enzyme catalyses L-citrulline + L-aspartate + ATP = 2-(N(omega)-L-arginino)succinate + AMP + diphosphate + H(+). Its pathway is amino-acid biosynthesis; L-arginine biosynthesis; L-arginine from L-ornithine and carbamoyl phosphate: step 2/3. The polypeptide is Argininosuccinate synthase (Ehrlichia canis (strain Jake)).